The chain runs to 262 residues: Homeobox protein vent1 (262 aa).

Composition is skewed to basic and acidic residues over residues 16-26 (REEAPDGKDSV) and 44-55 (YAKEIPRRKDGQ). The disordered stretch occupies residues 16–129 (REEAPDGKDS…KSPKSDLQRR (114 aa)). Residues 58–79 (GEITSFQCSSEEARNRQFSNPS) are compositionally biased toward polar residues. The segment covering 114-128 (DTEHRSKSPKSDLQR) has biased composition (basic and acidic residues). Positions 127 to 186 (QRRLRTAFTPQQITRLEQAFNKQRYLGASERKKLATSLQLSEIQVKTWFQNRRMKLKRQI) form a DNA-binding region, homeobox.

Its subcellular location is the nucleus. Transcriptional repressor. Cooperates with vent2 in a ventral signaling pathway downstream of bmp4, which antagonizes the Spemann organizer and dorsal mesoderm formation, and leads to ventral mesoderm formation. Acts downstream of bmp4 to repress transcription of foxa4-B/XFD-1'. Binds to DNA with preference for the target sequence 5'-CTATT[T/C]G-3'. Also binds 5'-TGCATTTTG-3' at a lower frequency, and occasionally 5'-TTGATC-3'. Binds to the homeobox 2 (HBX2) repressor element in the promoter of the myf5 gene. Cooperates with vent2 to repress myf5 expression in the ventral domain. The chain is Homeobox protein vent1 from Xenopus tropicalis (Western clawed frog).